A 397-amino-acid polypeptide reads, in one-letter code: Nuclear RNA export factor 5 (397 aa).

Positions 13–92 (WFKVTIPYGI…IFVSHFTAPY (80 aa)) constitute an RRM domain. LRR repeat units follow at residues 160 to 185 (ELLSLNLCNNKLYQLDGLSDITEKAP), 186 to 209 (KVKTLNLSKNKLESAWELGKVKGL), 210 to 237 (KLEELWLEGNPLCSTFSDQSAYVSAIRD), and 238 to 265 (CFPKLLRLDGRELSAPVIVDIDSSETMK). The NTF2; truncated domain occupies 280 to 367 (LVLQFLQQSN…ESQRWWCLLS (88 aa)).

Belongs to the NXF family. In terms of assembly, interacts with NXT1 and NXT2.

The protein localises to the cytoplasm. Its subcellular location is the nucleus. Could be involved in the export of mRNA from the nucleus to the cytoplasm. Could also have a role in polarized cytoplasmic transport and localization of mRNA in neurons. This is Nuclear RNA export factor 5 (NXF5) from Homo sapiens (Human).